The sequence spans 243 residues: Orotidine 5'-phosphate decarboxylase (243 aa).

Substrate contacts are provided by residues D16, K38, 65 to 74 (DLKLHDIPNT), T120, R181, Q190, G210, and R211. K67 serves as the catalytic Proton donor.

It belongs to the OMP decarboxylase family. Type 1 subfamily. Homodimer.

It catalyses the reaction orotidine 5'-phosphate + H(+) = UMP + CO2. Its pathway is pyrimidine metabolism; UMP biosynthesis via de novo pathway; UMP from orotate: step 2/2. Catalyzes the decarboxylation of orotidine 5'-monophosphate (OMP) to uridine 5'-monophosphate (UMP). This is Orotidine 5'-phosphate decarboxylase from Bradyrhizobium sp. (strain ORS 278).